Here is a 90-residue protein sequence, read N- to C-terminus: Probable Fe(2+)-trafficking protein (90 aa).

It belongs to the Fe(2+)-trafficking protein family.

Could be a mediator in iron transactions between iron acquisition and iron-requiring processes, such as synthesis and/or repair of Fe-S clusters in biosynthetic enzymes. The polypeptide is Probable Fe(2+)-trafficking protein (Dechloromonas aromatica (strain RCB)).